The sequence spans 472 residues: 2-oxoisovalerate dehydrogenase subunit alpha 1, mitochondrial (472 aa).

A mitochondrion-targeting transit peptide spans 1–56 (MAIWFARSKTLVSSLRHNLNLSTILIKRDYSHRPIFYTTSQLSSTAYLSPFGSLRH). 185 to 187 (QYR) lines the thiamine diphosphate pocket. S234, T239, and Q240 together coordinate K(+).

It belongs to the BCKDHA family. As to quaternary structure, heterotetramer of alpha and beta chains. Thiamine diphosphate is required as a cofactor.

The protein localises to the mitochondrion matrix. It catalyses the reaction N(6)-[(R)-lipoyl]-L-lysyl-[protein] + 3-methyl-2-oxobutanoate + H(+) = N(6)-[(R)-S(8)-2-methylpropanoyldihydrolipoyl]-L-lysyl-[protein] + CO2. The branched-chain alpha-keto dehydrogenase complex catalyzes the overall conversion of alpha-keto acids to acyl-CoA and CO(2). It contains multiple copies of three enzymatic components: branched-chain alpha-keto acid decarboxylase (E1), lipoamide acyltransferase (E2) and lipoamide dehydrogenase (E3). Required during sugar starvation. This is 2-oxoisovalerate dehydrogenase subunit alpha 1, mitochondrial from Arabidopsis thaliana (Mouse-ear cress).